A 309-amino-acid polypeptide reads, in one-letter code: Ribosomal RNA large subunit methyltransferase F (309 aa).

This sequence belongs to the methyltransferase superfamily. METTL16/RlmF family.

The protein localises to the cytoplasm. It catalyses the reaction adenosine(1618) in 23S rRNA + S-adenosyl-L-methionine = N(6)-methyladenosine(1618) in 23S rRNA + S-adenosyl-L-homocysteine + H(+). In terms of biological role, specifically methylates the adenine in position 1618 of 23S rRNA. This Cronobacter sakazakii (strain ATCC BAA-894) (Enterobacter sakazakii) protein is Ribosomal RNA large subunit methyltransferase F.